We begin with the raw amino-acid sequence, 199 residues long: MSPITDALVPMVVEQTSRGERSYDIYSRLLKERVIFLTGQVEDHMANLVVAQLLFLESENPDKDIFLYINSPGGSVTAGMSIYDTMQFIKPNVSTVCMGQACSMGAFLLAGGAKGKRYCLPNSRVMIHQPLGGFQGQASDIQIHAKEILTIKHRLNSLLAKHTGQPLEVVEGDTDRDNFMSADQAVEYGLVDSVLTQRD.

The Nucleophile role is filled by Ser103. Residue His128 is part of the active site.

It belongs to the peptidase S14 family. As to quaternary structure, fourteen ClpP subunits assemble into 2 heptameric rings which stack back to back to give a disk-like structure with a central cavity, resembling the structure of eukaryotic proteasomes.

The protein resides in the cytoplasm. It carries out the reaction Hydrolysis of proteins to small peptides in the presence of ATP and magnesium. alpha-casein is the usual test substrate. In the absence of ATP, only oligopeptides shorter than five residues are hydrolyzed (such as succinyl-Leu-Tyr-|-NHMec, and Leu-Tyr-Leu-|-Tyr-Trp, in which cleavage of the -Tyr-|-Leu- and -Tyr-|-Trp bonds also occurs).. Its function is as follows. Cleaves peptides in various proteins in a process that requires ATP hydrolysis. Has a chymotrypsin-like activity. Plays a major role in the degradation of misfolded proteins. The sequence is that of ATP-dependent Clp protease proteolytic subunit from Photobacterium profundum (strain SS9).